Reading from the N-terminus, the 347-residue chain is Circulating cathodic antigen (347 aa).

Residues 76–109 (ICLAAENKQLEQLKIENKTLRNSLDEHQTALDMI) adopt a coiled-coil conformation. The disordered stretch occupies residues 149-177 (PGPKSVNTPSTNSIDSQSVSQKSNSGKVD). The segment covering 153-174 (SVNTPSTNSIDSQSVSQKSNSG) has biased composition (polar residues). Residues 206–233 (DAYATELEEELHRLRSENAGLREILMIS) adopt a coiled-coil conformation. Positions 303–332 (LYNIPNPSDDSSNSGTISGNHSDEDSDEDD) are disordered. The span at 307–316 (PNPSDDSSNS) shows a compositional bias: low complexity.

The protein belongs to the SIKE family. Post-translationally, O-glycosylated.

Functionally, involved in protection of the schistosome gut. The chain is Circulating cathodic antigen from Schistosoma mansoni (Blood fluke).